A 421-amino-acid chain; its full sequence is Gamma-glutamyl phosphate reductase (421 aa).

This sequence belongs to the gamma-glutamyl phosphate reductase family.

The protein localises to the cytoplasm. It carries out the reaction L-glutamate 5-semialdehyde + phosphate + NADP(+) = L-glutamyl 5-phosphate + NADPH + H(+). It functions in the pathway amino-acid biosynthesis; L-proline biosynthesis; L-glutamate 5-semialdehyde from L-glutamate: step 2/2. Catalyzes the NADPH-dependent reduction of L-glutamate 5-phosphate into L-glutamate 5-semialdehyde and phosphate. The product spontaneously undergoes cyclization to form 1-pyrroline-5-carboxylate. In Brucella abortus (strain 2308), this protein is Gamma-glutamyl phosphate reductase.